Here is a 434-residue protein sequence, read N- to C-terminus: Gamma-glutamyl phosphate reductase (434 aa).

The protein belongs to the gamma-glutamyl phosphate reductase family.

Its subcellular location is the cytoplasm. The enzyme catalyses L-glutamate 5-semialdehyde + phosphate + NADP(+) = L-glutamyl 5-phosphate + NADPH + H(+). It participates in amino-acid biosynthesis; L-proline biosynthesis; L-glutamate 5-semialdehyde from L-glutamate: step 2/2. Catalyzes the NADPH-dependent reduction of L-glutamate 5-phosphate into L-glutamate 5-semialdehyde and phosphate. The product spontaneously undergoes cyclization to form 1-pyrroline-5-carboxylate. The chain is Gamma-glutamyl phosphate reductase from Rhodopirellula baltica (strain DSM 10527 / NCIMB 13988 / SH1).